Consider the following 238-residue polypeptide: Ribosomal RNA small subunit methyltransferase G (238 aa).

Residues G77, F82, A128–E129, and R147 each bind S-adenosyl-L-methionine.

Belongs to the methyltransferase superfamily. RNA methyltransferase RsmG family.

The protein localises to the cytoplasm. Functionally, specifically methylates the N7 position of guanine in position 535 of 16S rRNA. The sequence is that of Ribosomal RNA small subunit methyltransferase G from Geobacillus sp. (strain WCH70).